A 260-amino-acid chain; its full sequence is Caveolae-associated protein 3 (260 aa).

Positions 1–84 are interaction with CAVIN1; sequence MGESALESGP…SNTLAQLLAK (84 aa). The segment at 20–78 is leucine-zipper; the sequence is VHAVTVVTLLEKLATMLETLRERQGGLAQRQGGLAGSVRRIQSNLGALSRSHDTTSNTL. 2 positions are modified to phosphoserine: Ser62 and Ser70. Lys128 is covalently cross-linked (Glycyl lysine isopeptide (Lys-Gly) (interchain with G-Cter in SUMO2)). The tract at residues 135-201 is interaction with CAV1; the sequence is AKAFQKAPEP…SGRKGHAAPT (67 aa). The disordered stretch occupies residues 140-260; the sequence is KAPEPLGPVE…AAVLQVESAA (121 aa). A compositionally biased stretch (acidic residues) spans 157 to 168; sequence AEAEESSDEEEP. Residues Ser162, Ser163, and Ser171 each carry the phosphoserine modification. Positions 201–210 are enriched in pro residues; it reads TPTPVKPPRL.

This sequence belongs to the CAVIN family. As to quaternary structure, component of the CAVIN complex composed of CAVIN1, CAVIN2, CAVIN3 and CAVIN4. Interacts with PRKCD and with phosphatidylserine. Phosphatidylserine may form a bridge between PKC and PKC-binding partners and stabilize the binding. Interacts with PER2. Interacts with CAVIN1 and EPS15L1. Interacts (via leucine-zipper domain) with CAV1 in a cholesterol-sensitive manner. In vitro, phosphorylated by PRKCD.

Its subcellular location is the cytoplasm. The protein resides in the membrane. It is found in the caveola. The protein localises to the cytosol. In terms of biological role, regulates the traffic and/or budding of caveolae. Plays a role in caveola formation in a tissue-specific manner. Required for the formation of caveolae in smooth muscle but not in the lung and heart endothelial cells. Regulates the equilibrium between cell surface-associated and cell surface-dissociated caveolae by promoting the rapid release of caveolae from the cell surface. Plays a role in the regulation of the circadian clock. Modulates the period length and phase of circadian gene expression and also regulates expression and interaction of the core clock components PER1/2 and CRY1/2. This chain is Caveolae-associated protein 3 (CAVIN3), found in Bos taurus (Bovine).